We begin with the raw amino-acid sequence, 326 residues long: UDP-N-acetylglucosamine transporter (326 aa).

8 helical membrane passes run 8–24, 42–58, 138–154, 174–190, 210–226, 247–263, 269–285, and 296–312; these read LSLG…VLTM, AVVV…ILLV, VYQW…VAFV, FVGL…SGFA, IQLG…GVYI, IVVI…AAVI, ILKG…STLI, and TSVF…ATFL.

The protein belongs to the nucleotide-sugar transporter family. SLC35A subfamily. Interacts with SLC35A2; the interaction is reduced in the presence of SLC35A4. Found in a complex with SLC35A2 and SLC35A4.

It is found in the golgi apparatus membrane. Functionally, uridine diphosphate-N-acetylglucosamine (UDP-GlcNAc) transporter in the Golgi apparatus. May supply UDP-GlcNAc as substrate for Golgi-resident glycosyltransferases that generate branching of diantennary oligosaccharides. The chain is UDP-N-acetylglucosamine transporter (SLC35A3) from Canis lupus familiaris (Dog).